Reading from the N-terminus, the 329-residue chain is GTP 3',8-cyclase (329 aa).

Residues 8 to 234 (AFARKFYYLR…QLRQRSDGPA (227 aa)) enclose the Radical SAM core domain. GTP is bound at residue R17. C24 and C28 together coordinate [4Fe-4S] cluster. Y30 serves as a coordination point for S-adenosyl-L-methionine. C31 is a binding site for [4Fe-4S] cluster. GTP is bound at residue R68. S-adenosyl-L-methionine is bound at residue G72. T99 contacts GTP. S123 contributes to the S-adenosyl-L-methionine binding site. Position 160 (K160) interacts with GTP. M194 contacts S-adenosyl-L-methionine. [4Fe-4S] cluster is bound by residues C257 and C260. Position 262-264 (262-264 (RLR)) interacts with GTP. C274 is a binding site for [4Fe-4S] cluster.

It belongs to the radical SAM superfamily. MoaA family. In terms of assembly, monomer and homodimer. The cofactor is [4Fe-4S] cluster.

It catalyses the reaction GTP + AH2 + S-adenosyl-L-methionine = (8S)-3',8-cyclo-7,8-dihydroguanosine 5'-triphosphate + 5'-deoxyadenosine + L-methionine + A + H(+). The protein operates within cofactor biosynthesis; molybdopterin biosynthesis. Its function is as follows. Catalyzes the cyclization of GTP to (8S)-3',8-cyclo-7,8-dihydroguanosine 5'-triphosphate. The sequence is that of GTP 3',8-cyclase from Salmonella newport (strain SL254).